The chain runs to 498 residues: Acetyl-coenzyme A carboxylase carboxyl transferase subunit beta, chloroplastic (498 aa).

The CoA carboxyltransferase N-terminal domain occupies 228-498 (LWVQCEICYG…LNHNLSRTLT (271 aa)). Zn(2+)-binding residues include C232, C235, C251, and C254. The segment at 232–254 (CEICYGLNYKKFFKSKMNICEQC) adopts a C4-type zinc-finger fold.

It belongs to the AccD/PCCB family. Acetyl-CoA carboxylase is a heterohexamer composed of biotin carboxyl carrier protein, biotin carboxylase and 2 subunits each of ACCase subunit alpha and ACCase plastid-coded subunit beta (accD). Requires Zn(2+) as cofactor.

The protein resides in the plastid. It is found in the chloroplast stroma. It carries out the reaction N(6)-carboxybiotinyl-L-lysyl-[protein] + acetyl-CoA = N(6)-biotinyl-L-lysyl-[protein] + malonyl-CoA. It functions in the pathway lipid metabolism; malonyl-CoA biosynthesis; malonyl-CoA from acetyl-CoA: step 1/1. In terms of biological role, component of the acetyl coenzyme A carboxylase (ACC) complex. Biotin carboxylase (BC) catalyzes the carboxylation of biotin on its carrier protein (BCCP) and then the CO(2) group is transferred by the transcarboxylase to acetyl-CoA to form malonyl-CoA. The polypeptide is Acetyl-coenzyme A carboxylase carboxyl transferase subunit beta, chloroplastic (Populus trichocarpa (Western balsam poplar)).